The primary structure comprises 222 residues: Vesicle transport v-SNARE 12 (222 aa).

At Ser-2 the chain carries N-acetylserine. The Cytoplasmic segment spans residues 2 to 199; that stretch reads SDVFEGYERQ…MSRRMTRNKW (198 aa). Residues 68–95 adopt a coiled-coil conformation; sequence KAVCLSKLREYKSDLNQLKKEFKRVSSA. A helical; Anchor for type IV membrane protein transmembrane segment spans residues 200–220; it reads IITSVIVALVLAIILIISYKL. Over 221-222 the chain is Vesicular; it reads SH.

This sequence belongs to the VTI1 family. In terms of assembly, forms SNARE complexes with the t-SNAREs SYP61 and either SYP41 or SYP42, and with a much lower affinity with SYP51 in the TGN. Also interacts with VPS45, a Sec1 protein, but not with SYP21 or SYP22. Binds to EPSIN2. Core constituent of the SNARE complex required for membrane fusion at the trans-Golgi network. Interacts with SCYL2B. Expressed in roots, stems, flowers and leaves.

The protein localises to the golgi apparatus. It localises to the trans-Golgi network membrane. Its subcellular location is the prevacuolar compartment membrane. It is found in the cell membrane. In terms of biological role, together with either SYP41 or SYP61, required for membrane fusion; the fusion of phospholipid vesicles containing SYP41 or SYP61 and VTI12 is triggered by YKT61 and YKT62. Functions as a v-SNARE responsible for the docking or fusion of transport vesicles within the trans-Golgi network (TGN) and mediates liposome fusion. Necessary to deliver proteins to the protein storage vacuole (PSV). May be also involved in retrograde traffic to the cis-Golgi. The chain is Vesicle transport v-SNARE 12 from Arabidopsis thaliana (Mouse-ear cress).